An 815-amino-acid chain; its full sequence is Ataxin-1 (815 aa).

The segment covering 1 to 41 has biased composition (basic and acidic residues); the sequence is MKSNQERSNECLPPKKREIPATSRSSEEKAPTLPSDNHRVE. Positions 1-63 are disordered; it reads MKSNQERSNE…GHGGGRHGPA (63 aa). Lys16 participates in a covalent cross-link: Glycyl lysine isopeptide (Lys-Gly) (interchain with G-Cter in SUMO). Residues 49–61 show a composition bias toward gly residues; that stretch reads NPGGRGHGGGRHG. Phosphoserine is present on residues Ser82 and Ser88. Disordered stretches follow at residues 185–270, 329–355, and 397–424; these read GSLS…PVHL, EKSR…VPHP, and VQQA…PGHR. Lys194 is covalently cross-linked (Glycyl lysine isopeptide (Lys-Gly) (interchain with G-Cter in SUMO)). Low complexity predominate over residues 197 to 226; sequence QQQQQQQQQQQQHQHQQQQQQQQQQQQQQH. A phosphoserine mark is found at Ser238 and Ser253. Polar residues predominate over residues 243-260; sequence QQNQYVHISSSPQNTGRT. The tract at residues 494–604 is self-association; it reads VGSTDMEASG…TEDFIQSAEI (111 aa). Residues 538–815 are interaction with USP7; it reads LVTQAAYPAM…CIEGRSNVGK (278 aa). Residues 540-766 form an RNA-binding region; the sequence is TQAAYPAMVQ…FLTKIEPSKP (227 aa). Residues 562–693 enclose the AXH domain; the sequence is SPAAAPPTLP…SLTLKNLKNG (132 aa). Glycyl lysine isopeptide (Lys-Gly) (interchain with G-Cter in SUMO) cross-links involve residues Lys609, Lys696, and Lys745. The disordered stretch occupies residues 762–798; it reads EPSKPAATRKRRWSAPESRKLEKSEDEPPLTLPKPSL. Position 775 is a phosphoserine (Ser775). The Nuclear localization signal motif lies at 794–797; that stretch reads PKPS.

Belongs to the ATXN1 family. In terms of assembly, homooligomer. Interacts with CIC. Interacts with ANP32A, PQBP1, UBQLN4, ATXN1L and USP7. Directly interacts with RBPJ; this interaction is disrupted in the presence of Notch intracellular domain. Competes with ATXN1L for RBPJ-binding. Found in a complex with CIC and ATXN1L. In terms of processing, ubiquitinated by UBE3A, leading to its degradation by the proteasome. The presence of expanded poly-Gln repeats in spinocerebellar ataxia 1 (SCA1) patients impairs ubiquitination and degradation, leading to accumulation of ATXN1 in neurons and subsequent toxicity. Post-translationally, phosphorylation at Ser-775 increases the pathogenicity of proteins with an expanded polyglutamine tract. Sumoylation is dependent on nuclear localization and phosphorylation at Ser-775. It is reduced in the presence of an expanded polyglutamine tract. In terms of tissue distribution, widely expressed throughout the body.

It localises to the cytoplasm. Its subcellular location is the nucleus. Chromatin-binding factor that repress Notch signaling in the absence of Notch intracellular domain by acting as a CBF1 corepressor. Binds to the HEY promoter and might assist, along with NCOR2, RBPJ-mediated repression. Binds RNA in vitro. May be involved in RNA metabolism. In concert with CIC and ATXN1L, involved in brain development. The protein is Ataxin-1 (ATXN1) of Homo sapiens (Human).